A 236-amino-acid polypeptide reads, in one-letter code: Snake venom serine protease ussurin (236 aa).

In terms of domain architecture, Peptidase S1 spans Val1 to Ser227. The cysteines at positions 28 and 44 are disulfide-linked. Residues His43 and Asp88 each act as charge relay system in the active site. N-linked (GlcNAc...) asparagine glycosylation is found at Asn99 and Asn100. 3 disulfide bridges follow: Cys120–Cys188, Cys152–Cys167, and Cys178–Cys203. Ser182 acts as the Charge relay system in catalysis.

This sequence belongs to the peptidase S1 family. Snake venom subfamily. As to quaternary structure, monomer. In terms of tissue distribution, expressed by the venom gland.

The protein resides in the secreted. In terms of biological role, snake venom serine protease that may act in the hemostasis system of the prey. This chain is Snake venom serine protease ussurin, found in Gloydius ussuriensis (Ussuri mamushi).